The following is a 429-amino-acid chain: Aspartate--tRNA(Asp/Asn) ligase (429 aa).

E166 is an L-aspartate binding site. The interval 188–191 (QLYK) is aspartate. R210 is an L-aspartate binding site. Residues 210–212 (RAE), 218–220 (RHL), and E352 contribute to the ATP site. Positions 352 and 355 each coordinate Mg(2+). 2 residues coordinate L-aspartate: S355 and R359. 400-403 (GAER) provides a ligand contact to ATP.

This sequence belongs to the class-II aminoacyl-tRNA synthetase family. Type 2 subfamily. In terms of assembly, homodimer. It depends on Mg(2+) as a cofactor.

It is found in the cytoplasm. The catalysed reaction is tRNA(Asx) + L-aspartate + ATP = L-aspartyl-tRNA(Asx) + AMP + diphosphate. Its function is as follows. Aspartyl-tRNA synthetase with relaxed tRNA specificity since it is able to aspartylate not only its cognate tRNA(Asp) but also tRNA(Asn). Reaction proceeds in two steps: L-aspartate is first activated by ATP to form Asp-AMP and then transferred to the acceptor end of tRNA(Asp/Asn). The chain is Aspartate--tRNA(Asp/Asn) ligase from Methanocorpusculum labreanum (strain ATCC 43576 / DSM 4855 / Z).